Here is an 838-residue protein sequence, read N- to C-terminus: Probable beta-glucosidase I (838 aa).

Residue N197 is glycosylated (N-linked (GlcNAc...) asparagine). D225 is a catalytic residue. The PA14 domain occupies 395–555 (DGKKGFKFRV…SQEELISKAA (161 aa)). Residue N493 is glycosylated (N-linked (GlcNAc...) asparagine).

The protein belongs to the glycosyl hydrolase 3 family.

Its subcellular location is the secreted. The catalysed reaction is Hydrolysis of terminal, non-reducing beta-D-glucosyl residues with release of beta-D-glucose.. It participates in glycan metabolism; cellulose degradation. Its function is as follows. Beta-glucosidases are one of a number of cellulolytic enzymes involved in the degradation of cellulosic biomass. Catalyzes the last step releasing glucose from the inhibitory cellobiose. The polypeptide is Probable beta-glucosidase I (bglI) (Neosartorya fischeri (strain ATCC 1020 / DSM 3700 / CBS 544.65 / FGSC A1164 / JCM 1740 / NRRL 181 / WB 181) (Aspergillus fischerianus)).